The following is a 553-amino-acid chain: Methyl-coenzyme M reductase subunit alpha (553 aa).

Coenzyme F430 is bound at residue Gln-151. Coenzyme B contacts are provided by residues Arg-229, Lys-260–His-261, and Arg-274. Positions 336 and 447 each coordinate coenzyme M.

It belongs to the methyl-coenzyme M reductase alpha subunit family. MCR is a hexamer of two alpha, two beta, and two gamma chains, forming a dimer of heterotrimers. Coenzyme F430 is required as a cofactor.

It is found in the cytoplasm. It catalyses the reaction coenzyme B + methyl-coenzyme M = methane + coenzyme M-coenzyme B heterodisulfide. It functions in the pathway one-carbon metabolism; methyl-coenzyme M reduction; methane from methyl-coenzyme M: step 1/1. In terms of biological role, component of the methyl-coenzyme M reductase (MCR) I that catalyzes the reductive cleavage of methyl-coenzyme M (CoM-S-CH3 or 2-(methylthio)ethanesulfonate) using coenzyme B (CoB or 7-mercaptoheptanoylthreonine phosphate) as reductant which results in the production of methane and the mixed heterodisulfide of CoB and CoM (CoM-S-S-CoB). This is the final step in methanogenesis. This is Methyl-coenzyme M reductase subunit alpha (mcrA) from Methanococcus vannielii.